Here is a 422-residue protein sequence, read N- to C-terminus: Elongation factor 1-alpha (422 aa).

Residues 5–221 (KPHMNLAVIG…DELKEPEKPS (217 aa)) enclose the tr-type G domain. The tract at residues 14–21 (GHIDHGKS) is G1. GTP is bound at residue 14 to 21 (GHIDHGKS). A Mg(2+)-binding site is contributed by S21. The segment at 70 to 74 (GITID) is G2. Residues 91 to 94 (DCPG) form a G3 region. GTP is bound by residues 91-95 (DCPGH) and 146-149 (NKMD). A G4 region spans residues 146 to 149 (NKMD). The segment at 185–187 (SAF) is G5.

The protein belongs to the TRAFAC class translation factor GTPase superfamily. Classic translation factor GTPase family. EF-Tu/EF-1A subfamily.

Its subcellular location is the cytoplasm. It carries out the reaction GTP + H2O = GDP + phosphate + H(+). GTP hydrolase that promotes the GTP-dependent binding of aminoacyl-tRNA to the A-site of ribosomes during protein biosynthesis. The sequence is that of Elongation factor 1-alpha from Methanosarcina acetivorans (strain ATCC 35395 / DSM 2834 / JCM 12185 / C2A).